We begin with the raw amino-acid sequence, 570 residues long: MEDDKDIYTKDGTLDIHKKPANKNKTGTWKACRFILGTECCERLAYYGMSTNLINYLEKQMNMENVSASKSVSNWSGTCYATPLIGAFIADAYLGRYWTIASFVVIYIAGMTLLTISASVPGLTPTCSGETCHATAGQTAITFIALYLIALGTGGIKPCVSSFGADQFDDTDEKEKESKSSFFNWFYFVINVGAMIASSVLVWIQMNVGWGWGLGVPTVAMAIAVVFFFAGSNFYRLQKPGGSPLTRMLQVIVASCRKSKVKIPEDESLLYENQDAESSIIGSRKLEHTKILTFFDKAAVETESDNKGAAKSSSWKLCTVTQVEELKALIRLLPIWATGIVFASVYSQMGTVFVLQGNTLDQHMGPNFKIPSASLSLFDTLSVLFWAPVYDKLIVPFARKYTGHERGFTQLQRIGIGLVISIFSMVSAGILEVARLNYVQTHNLYNEETIPMTIFWQVPQYFLVGCAEVFTFIGQLEFFYDQAPDAMRSLCSALSLTAIAFGNYLSTFLVTLVTKVTRSGGRPGWIAKNLNNGHLDYFFWLLAGLSFLNFLVYLWIAKWYTYKKTTGHAL.

The residue at position 99 (Thr99) is a Phosphothreonine. 10 helical membrane passes run Ile100–Val120, Ala136–Ile156, Phe182–Val202, Trp210–Ala230, Ile335–Leu355, Ile370–Tyr390, Ile414–Ala434, Ile454–Gly474, Ala493–Val513, and Tyr537–Ala557.

It belongs to the major facilitator superfamily. Proton-dependent oligopeptide transporter (POT/PTR) (TC 2.A.17) family. As to expression, expressed in developing and germinating pollen grains and ovules.

The protein localises to the cell membrane. Peptide transporter. Mediates the transport of di- and tripeptides. High affinity transporter. Involved in the uptake of peptides during pollen germination and tube growth. The protein is Protein NRT1/ PTR FAMILY 8.2 (NPF8.2) of Arabidopsis thaliana (Mouse-ear cress).